The primary structure comprises 89 residues: Small ribosomal subunit protein uS15 (89 aa).

Belongs to the universal ribosomal protein uS15 family. Part of the 30S ribosomal subunit. Forms a bridge to the 50S subunit in the 70S ribosome, contacting the 23S rRNA.

Its function is as follows. One of the primary rRNA binding proteins, it binds directly to 16S rRNA where it helps nucleate assembly of the platform of the 30S subunit by binding and bridging several RNA helices of the 16S rRNA. Functionally, forms an intersubunit bridge (bridge B4) with the 23S rRNA of the 50S subunit in the ribosome. In Desulforapulum autotrophicum (strain ATCC 43914 / DSM 3382 / VKM B-1955 / HRM2) (Desulfobacterium autotrophicum), this protein is Small ribosomal subunit protein uS15.